The following is a 283-amino-acid chain: Pantothenate synthetase (283 aa).

30–37 (MGNLHDGH) lines the ATP pocket. His37 (proton donor) is an active-site residue. Gln61 lines the (R)-pantoate pocket. A beta-alanine-binding site is contributed by Gln61. 149 to 152 (GEKD) contacts ATP. Residue Gln155 participates in (R)-pantoate binding. Residues Met178 and 186–189 (LSSR) each bind ATP.

Belongs to the pantothenate synthetase family. Homodimer.

It is found in the cytoplasm. The catalysed reaction is (R)-pantoate + beta-alanine + ATP = (R)-pantothenate + AMP + diphosphate + H(+). The protein operates within cofactor biosynthesis; (R)-pantothenate biosynthesis; (R)-pantothenate from (R)-pantoate and beta-alanine: step 1/1. Its activity is regulated as follows. Activation requires a combination of a divalent cation, magnesium or manganese, and a monovalent cation, potassium or ammonium. Above the optimum concentration for activation, magnesium and manganese are rather inhibitory. Also activated by 2-mercaptoethanol, dithiothreitol, cysteine and glutathione. Inhibited by divalent cations (mercury, cobalt, zinc, copper, silver), chelating agents (EDTA, EGTA and o-phenanthroline), and analogs of beta-alanine (taurine, gamma-aminobutyrate, gamma-amino-beta-hydroxybutyrate). In terms of biological role, catalyzes the condensation of pantoate with beta-alanine in an ATP-dependent reaction via a pantoyl-adenylate intermediate. In Escherichia coli (strain K12), this protein is Pantothenate synthetase (panC).